The sequence spans 286 residues: ATP synthase gamma chain (286 aa).

It belongs to the ATPase gamma chain family. As to quaternary structure, F-type ATPases have 2 components, CF(1) - the catalytic core - and CF(0) - the membrane proton channel. CF(1) has five subunits: alpha(3), beta(3), gamma(1), delta(1), epsilon(1). CF(0) has three main subunits: a, b and c.

It localises to the cell inner membrane. Its function is as follows. Produces ATP from ADP in the presence of a proton gradient across the membrane. The gamma chain is believed to be important in regulating ATPase activity and the flow of protons through the CF(0) complex. In Shewanella oneidensis (strain ATCC 700550 / JCM 31522 / CIP 106686 / LMG 19005 / NCIMB 14063 / MR-1), this protein is ATP synthase gamma chain.